Consider the following 218-residue polypeptide: Redox-sensing transcriptional repressor Rex (218 aa).

The H-T-H motif DNA-binding region spans 18-57 (LYYRFIQSLHASGKQRVSSAELSEAVKVDSATIRRDFSYF). 92–97 (GVGHLG) is a binding site for NAD(+).

Belongs to the transcriptional regulatory Rex family. In terms of assembly, homodimer.

The protein localises to the cytoplasm. Functionally, modulates transcription in response to changes in cellular NADH/NAD(+) redox state. This is Redox-sensing transcriptional repressor Rex from Exiguobacterium sp. (strain ATCC BAA-1283 / AT1b).